Here is a 229-residue protein sequence, read N- to C-terminus: Cytochrome c oxidase subunit 2 (229 aa).

Over 1–26 the chain is Mitochondrial intermembrane; sequence MSTWANLGLQDSASPLMEQLIFFHDH. A helical membrane pass occupies residues 27–48; that stretch reads ALLILVMITVLVGYLMFMLFFN. Over 49–62 the chain is Mitochondrial matrix; sequence SYVNRFLLHGQLIE. Residues 63–82 form a helical membrane-spanning segment; that stretch reads MIWTILPAIILLFIAMPSLR. At 83-229 the chain is on the mitochondrial intermembrane side; that stretch reads LLYLLDEINE…IKWISNSVNS (147 aa). Residues His-161, Cys-196, Glu-198, Cys-200, His-204, and Met-207 each coordinate Cu cation. Residue Glu-198 participates in Mg(2+) binding.

The protein belongs to the cytochrome c oxidase subunit 2 family. In terms of assembly, component of the cytochrome c oxidase (complex IV, CIV), a multisubunit enzyme composed of a catalytic core of 3 subunits and several supernumerary subunits. The complex exists as a monomer or a dimer and forms supercomplexes (SCs) in the inner mitochondrial membrane with ubiquinol-cytochrome c oxidoreductase (cytochrome b-c1 complex, complex III, CIII). Cu cation is required as a cofactor.

It is found in the mitochondrion inner membrane. The enzyme catalyses 4 Fe(II)-[cytochrome c] + O2 + 8 H(+)(in) = 4 Fe(III)-[cytochrome c] + 2 H2O + 4 H(+)(out). In terms of biological role, component of the cytochrome c oxidase, the last enzyme in the mitochondrial electron transport chain which drives oxidative phosphorylation. The respiratory chain contains 3 multisubunit complexes succinate dehydrogenase (complex II, CII), ubiquinol-cytochrome c oxidoreductase (cytochrome b-c1 complex, complex III, CIII) and cytochrome c oxidase (complex IV, CIV), that cooperate to transfer electrons derived from NADH and succinate to molecular oxygen, creating an electrochemical gradient over the inner membrane that drives transmembrane transport and the ATP synthase. Cytochrome c oxidase is the component of the respiratory chain that catalyzes the reduction of oxygen to water. Electrons originating from reduced cytochrome c in the intermembrane space (IMS) are transferred via the dinuclear copper A center (CU(A)) of subunit 2 and heme A of subunit 1 to the active site in subunit 1, a binuclear center (BNC) formed by heme A3 and copper B (CU(B)). The BNC reduces molecular oxygen to 2 water molecules using 4 electrons from cytochrome c in the IMS and 4 protons from the mitochondrial matrix. The protein is Cytochrome c oxidase subunit 2 (mt:CoII) of Drosophila ambigua (Fruit fly).